The primary structure comprises 840 residues: Translation initiation factor IF-2 (840 aa).

Over residues 95–143 (RSPDEIEAERQRELEEQRAAEEAERLKAEEAAARQRAEEEARKAEEAAR) the composition is skewed to basic and acidic residues. Disordered stretches follow at residues 95–155 (RSPD…ATAG) and 173–256 (PAAV…PTGP). Over residues 144-155 (AKAAQEAAATAG) the composition is skewed to low complexity. 2 stretches are compositionally biased toward basic and acidic residues: residues 175–191 (AVEE…PKRD) and 223–232 (STDEESDGYR). Residues 233–247 (RGGRGGKSKLKKRNQ) are compositionally biased toward basic residues. Residues 340–509 (TRAPVVTVMG…LLQAEVLELK (170 aa)) form the tr-type G domain. The tract at residues 349 to 356 (GHVDHGKT) is G1. 349-356 (GHVDHGKT) is a binding site for GTP. A G2 region spans residues 374 to 378 (GITQH). The interval 395-398 (DTPG) is G3. Residues 395-399 (DTPGH) and 449-452 (NKID) each bind GTP. Residues 449 to 452 (NKID) are G4. The G5 stretch occupies residues 485 to 487 (SAK).

Belongs to the TRAFAC class translation factor GTPase superfamily. Classic translation factor GTPase family. IF-2 subfamily.

Its subcellular location is the cytoplasm. One of the essential components for the initiation of protein synthesis. Protects formylmethionyl-tRNA from spontaneous hydrolysis and promotes its binding to the 30S ribosomal subunits. Also involved in the hydrolysis of GTP during the formation of the 70S ribosomal complex. This Pseudomonas aeruginosa (strain ATCC 15692 / DSM 22644 / CIP 104116 / JCM 14847 / LMG 12228 / 1C / PRS 101 / PAO1) protein is Translation initiation factor IF-2.